We begin with the raw amino-acid sequence, 115 residues long: UPF0597 protein NTHI1023 (115 aa).

It belongs to the UPF0597 family.

The protein is UPF0597 protein NTHI1023 of Haemophilus influenzae (strain 86-028NP).